A 233-amino-acid polypeptide reads, in one-letter code: Large ribosomal subunit protein uL1 (233 aa).

The protein belongs to the universal ribosomal protein uL1 family. Part of the 50S ribosomal subunit.

Binds directly to 23S rRNA. The L1 stalk is quite mobile in the ribosome, and is involved in E site tRNA release. Its function is as follows. Protein L1 is also a translational repressor protein, it controls the translation of the L11 operon by binding to its mRNA. In Vibrio vulnificus (strain CMCP6), this protein is Large ribosomal subunit protein uL1.